The following is a 647-amino-acid chain: tRNA 5-methylaminomethyl-2-thiouridine biosynthesis bifunctional protein MnmC (647 aa).

Residues 1–235 form a tRNA (mnm(5)s(2)U34)-methyltransferase region; that stretch reads MSIPPFSQAS…KRDMLCGRFT (235 aa). Positions 250 to 647 are FAD-dependent cmnm(5)s(2)U34 oxidoreductase; sequence IGGGIAGTAS…RGLACHPLRR (398 aa).

In the N-terminal section; belongs to the methyltransferase superfamily. tRNA (mnm(5)s(2)U34)-methyltransferase family. It in the C-terminal section; belongs to the DAO family. FAD is required as a cofactor.

It localises to the cytoplasm. The enzyme catalyses 5-aminomethyl-2-thiouridine(34) in tRNA + S-adenosyl-L-methionine = 5-methylaminomethyl-2-thiouridine(34) in tRNA + S-adenosyl-L-homocysteine + H(+). Its function is as follows. Catalyzes the last two steps in the biosynthesis of 5-methylaminomethyl-2-thiouridine (mnm(5)s(2)U) at the wobble position (U34) in tRNA. Catalyzes the FAD-dependent demodification of cmnm(5)s(2)U34 to nm(5)s(2)U34, followed by the transfer of a methyl group from S-adenosyl-L-methionine to nm(5)s(2)U34, to form mnm(5)s(2)U34. The sequence is that of tRNA 5-methylaminomethyl-2-thiouridine biosynthesis bifunctional protein MnmC from Methylobacillus flagellatus (strain ATCC 51484 / DSM 6875 / VKM B-1610 / KT).